A 209-amino-acid chain; its full sequence is COP9 signalosome complex subunit 8 (209 aa).

Residues 8–179 (DNAFSFRKLL…GALDVSLNRF (172 aa)) enclose the PCI domain. Phosphoserine is present on serine 175.

This sequence belongs to the CSN8 family. In terms of assembly, component of the CSN complex, composed of COPS1/GPS1, COPS2, COPS3, COPS4, COPS5, COPS6, COPS7 (COPS7A or COPS7B), COPS8 and COPS9. In the complex, it probably interacts directly with COPS3, COPS4 and COPS7 (COPS7A or COPS7B).

The protein localises to the cytoplasm. It localises to the nucleus. Component of the COP9 signalosome complex (CSN), a complex involved in various cellular and developmental processes. The CSN complex is an essential regulator of the ubiquitin (Ubl) conjugation pathway by mediating the deneddylation of the cullin subunits of SCF-type E3 ligase complexes, leading to decrease the Ubl ligase activity of SCF-type complexes such as SCF, CSA or DDB2. The complex is also involved in phosphorylation of p53/TP53, c-jun/JUN, IkappaBalpha/NFKBIA, ITPK1 and IRF8/ICSBP, possibly via its association with CK2 and PKD kinases. CSN-dependent phosphorylation of TP53 and JUN promotes and protects degradation by the Ubl system, respectively. The protein is COP9 signalosome complex subunit 8 (Cops8) of Rattus norvegicus (Rat).